Here is a 165-residue protein sequence, read N- to C-terminus: 3-isopropylmalate dehydratase small subunit (165 aa).

The protein belongs to the LeuD family. LeuD type 2 subfamily. In terms of assembly, heterodimer of LeuC and LeuD.

The catalysed reaction is (2R,3S)-3-isopropylmalate = (2S)-2-isopropylmalate. Its pathway is amino-acid biosynthesis; L-leucine biosynthesis; L-leucine from 3-methyl-2-oxobutanoate: step 2/4. Its function is as follows. Catalyzes the isomerization between 2-isopropylmalate and 3-isopropylmalate, via the formation of 2-isopropylmaleate. The protein is 3-isopropylmalate dehydratase small subunit of Halothermothrix orenii (strain H 168 / OCM 544 / DSM 9562).